The primary structure comprises 108 residues: Circadian clock oscillator protein KaiB (108 aa).

This sequence belongs to the KaiB family. In terms of assembly, may undergo a major conformational rearrangment; in the free state forms homooligomers. When bound to KaiC switches to a monomeric thioredoxin-fold (KaiB(fs)). The active oscillator complex is probably KaiC(6):KaiB(6).

Its function is as follows. Component of the KaiBC clock protein complex, which constitutes the main circadian regulator in cyanobacteria; it may modify the ATPase activity of KaiC. In terms of biological role, may be a metamorphic protein which reversibly switches between an inactive tetrameric fold and a rare, thioredoxin-like monomeric fold (KaiB(fs)). KaiB(fs) binds phospho-KaiC, and perhaps clock output effectors. This is Circadian clock oscillator protein KaiB from Prochlorococcus marinus (strain MIT 9515).